Here is a 70-residue protein sequence, read N- to C-terminus: MVQLEQRIEDLEMKLAFQDDTIESLNQQVIRLNDLLADQQEKLRLLTSKLSQVEPSNIASQAEETPPPHY.

The protein belongs to the SlyX family.

The protein is Protein SlyX homolog of Shewanella loihica (strain ATCC BAA-1088 / PV-4).